The following is a 380-amino-acid chain: Protein RecA (380 aa).

65-72 (GPESSGKT) serves as a coordination point for ATP. A disordered region spans residues 329–380 (DATGEETSETDDQAKEAKDKGTAKNGSKGQSKSTKATPAETALDLGDQPTEK). A compositionally biased stretch (basic and acidic residues) spans 340–350 (DQAKEAKDKGT). Residues 352–364 (KNGSKGQSKSTKA) are compositionally biased toward polar residues.

It belongs to the RecA family.

Its subcellular location is the cytoplasm. In terms of biological role, can catalyze the hydrolysis of ATP in the presence of single-stranded DNA, the ATP-dependent uptake of single-stranded DNA by duplex DNA, and the ATP-dependent hybridization of homologous single-stranded DNAs. It interacts with LexA causing its activation and leading to its autocatalytic cleavage. In Lactiplantibacillus plantarum (strain ATCC BAA-793 / NCIMB 8826 / WCFS1) (Lactobacillus plantarum), this protein is Protein RecA.